Reading from the N-terminus, the 639-residue chain is MAPKPPAGTSSRAWEAVSPSLSEWVLDAVASWGFSKMTPVQASAIPLFMAHKDVVVEAVTGSGKTLSFLVPVVEKLLRLEEPIKKHHIGAIIISPTRELASQIHQVLLSLLAFHPPSAAAIKPPGEDDAPREKFSASTLKVVPQLLLGGSTTPAEDLSYFLKHSPNVLISTPGRLLELLSSPHVHCPQSSFEMLVLDEADRLLDLGFKETLQNILRRLPKQRRTGLFSASISEAVDQIVRVGLRNPVKVLVKVKGTSGVQDKRTPASLQMTYLTTPPAHKFLTLRPILTSLQPTPQKTIFFVSTCSGVDYLAAILPLLLGDDFQLIPLHGKHPANVRQKNFNRFINAHTPSILLTTDVASRGLDIPSVDLVVQIDPPSDPKTFIHRCGRAGRAGRRGVSVVLLHPGREEDYVSFLEVRKTPVTPFPHPISISDSDASTATEAARKIIKQDRALHDRGQKAFVSWLRSYSKHQASSIFRVADLDWEALGHAWGLLKLPKMPELRNFTGDRTLGVDLDWENYAYKDKQREKRRKEVLQESAEAGAQQTSNKRRASESVAWSNKVDQKNKKQKRREQKHLQQEKRRWEKMTEEEKQKARETQKMLEEIRQKNEEARALRRAEKAAGKAADNDGDDDEFEGFD.

The Q motif motif lies at 14–42; it reads WEAVSPSLSEWVLDAVASWGFSKMTPVQA. The 205-residue stretch at 45–249 folds into the Helicase ATP-binding domain; that stretch reads IPLFMAHKDV…RVGLRNPVKV (205 aa). 58–65 serves as a coordination point for ATP; it reads AVTGSGKT. The DEAD box motif lies at 197-200; it reads DEAD. The Helicase C-terminal domain occupies 283 to 437; that stretch reads TLRPILTSLQ…PISISDSDAS (155 aa). The stretch at 521–624 forms a coiled coil; it reads AYKDKQREKR…LRRAEKAAGK (104 aa). The segment at 536–639 is disordered; the sequence is QESAEAGAQQ…GDDDEFEGFD (104 aa). The segment covering 575–622 has biased composition (basic and acidic residues); the sequence is KHLQQEKRRWEKMTEEEKQKARETQKMLEEIRQKNEEARALRRAEKAA. The span at 628–639 shows a compositional bias: acidic residues; that stretch reads NDGDDDEFEGFD.

This sequence belongs to the DEAD box helicase family. DDX55/SPB4 subfamily. As to quaternary structure, component of pre-60S ribosomal complexes.

The protein resides in the nucleus. It localises to the nucleolus. It catalyses the reaction ATP + H2O = ADP + phosphate + H(+). ATP-binding RNA helicase involved in the biogenesis of 60S ribosomal subunits. Binds 90S pre-ribosomal particles and dissociates from pre-60S ribosomal particles after processing of 27SB pre-rRNA. Required for the normal formation of 18S rRNA through the processing of pre-rRNAs at sites A0, A1 and A2, and the normal formation of 25S and 5.8S rRNAs through the processing of pre-rRNAs at sites C1 and C2. The polypeptide is ATP-dependent rRNA helicase spb4 (Aspergillus terreus (strain NIH 2624 / FGSC A1156)).